Reading from the N-terminus, the 2240-residue chain is Cadherin-89D (2240 aa).

5 Cadherin domains span residues 70–179, 180–295, 296–411, 412–528, and 529–643; these read SEGV…APEF, LNVP…PPKF, TEGV…VPEF, EADY…TPKF, and EHGN…APYE. 19 N-linked (GlcNAc...) asparagine glycosylation sites follow: asparagine 114, asparagine 119, asparagine 191, asparagine 278, asparagine 334, asparagine 417, asparagine 585, asparagine 720, asparagine 752, asparagine 822, asparagine 833, asparagine 983, asparagine 989, asparagine 1006, asparagine 1255, asparagine 1318, asparagine 1486, asparagine 1529, and asparagine 1556. The disordered stretch occupies residues 814 to 844; sequence MPSEPTSRNITMGSRFRSRNRSRSSKSKRRL. 5 consecutive Cadherin domains span residues 824–927, 928–1087, 1171–1284, 1285–1389, and 1411–1520; these read TMGS…APKF, NALT…APMF, TTKC…APTF, KKSW…RPEF, and MLPV…PPKS. Basic residues predominate over residues 829–844; that stretch reads FRSRNRSRSSKSKRRL. Cadherin domains lie at 1534-1660 and 1661-1774; these read QHAY…APKF and RGNG…MPVE. Residues 1884–1904 traverse the membrane as a helical segment; the sequence is FVTVVLLALISLGALIAACCY. Topologically, residues 1905 to 2240 are cytoplasmic; it reads VCMRQKRRLW…LEFSKSNSLF (336 aa). Disordered stretches follow at residues 1930-1972 and 2121-2140; these read IAGI…PESV and AHLE…EDSL. A compositionally biased stretch (basic residues) spans 1939–1952; sequence QKQRRQRQQRHTQR. Positions 1953–1964 are enriched in polar residues; it reads CSKGSTGSQRPT.

Its subcellular location is the cell membrane. Its function is as follows. Cadherins are calcium-dependent cell adhesion proteins. They preferentially interact with themselves in a homophilic manner in connecting cells. The protein is Cadherin-89D (Cad89D) of Drosophila melanogaster (Fruit fly).